A 341-amino-acid polypeptide reads, in one-letter code: Ribulose-5-phosphate reductase 2 (341 aa).

Residues Cys-38, His-64, Glu-65, and Glu-144 each coordinate Zn(2+).

Belongs to the zinc-containing alcohol dehydrogenase family. As to quaternary structure, heterodimer together with TarI. Requires Zn(2+) as cofactor.

It carries out the reaction D-ribitol 5-phosphate + NADP(+) = D-ribulose 5-phosphate + NADPH + H(+). Its pathway is cell wall biogenesis; poly(ribitol phosphate) teichoic acid biosynthesis. In terms of biological role, catalyzes the NADPH dependent reduction of D-ribulose 5-phosphate to D-ribitol 5-phosphate. This chain is Ribulose-5-phosphate reductase 2, found in Staphylococcus aureus (strain NCTC 8325 / PS 47).